The sequence spans 1491 residues: CLIP-associating protein (1491 aa).

HEAT repeat units lie at residues 44–82, 85–123, 163–201, and 402–440; these read CTDMGFLIDGLMPWLTGSHFKIAQKSLEAFSELIKRLGS, NAYTATVLPHVIDRLGDSRDTVREKAQLLLRDLMEHRVL, QLSVRVYIPPVCALLGDPTVNVREAAIQTLVEIYKHVGD, and DAFCWSILEHLINLIQNSAKVIASASTIALKYIIKYTHA. Disordered regions lie at residues 537–586 and 600–739; these read RERE…AVDT and LYSR…NNPV. A compositionally biased stretch (gly residues) spans 542–551; it reads GGGGGTGTGT. A compositionally biased stretch (polar residues) spans 569-580; sequence GTLQKPTPSMRS. Phosphoserine occurs at positions 582, 626, and 634. Over residues 632 to 646 the composition is skewed to polar residues; it reads LNSNSGGTPATTPGS. Phosphothreonine is present on T648. Composition is skewed to polar residues over residues 657–671 and 699–712; these read VSQSQPGSRSTSPST and PRSTASSRETSPTR. Residues S806, S817, S820, S822, and S824 each carry the phosphoserine modification. HEAT repeat units follow at residues 874–912 and 955–993; these read QQQLKCVLDMFRKMFMDTHTKVYSLFLDTVTELILVHAN and QLQLKELFRIISDSTQTPTTKTRIAILRFLTDLANTYCK. Disordered regions lie at residues 1065–1127 and 1167–1205; these read HMRR…SVEQ and GHLQYHDQGQQDSCASLSSNSKTQSSANTTQSNTPESAT. Low complexity-rich tracts occupy residues 1070–1097, 1111–1124, and 1181–1200; these read SQSCNSGANSPSSSPLSSSSPKPLQSPS, LSISSTSPRSRQSS, and ASLSSNSKTQSSANTTQSNT. S1120, S1123, and S1124 each carry phosphoserine. HEAT repeat units lie at residues 1289-1327 and 1408-1446; these read NKHFRSIMRMLLNILEAEHTDVVIAGLHVLSKIMRSNKM and DAHLDIVFPNLARSADDTQSMVRKAAVFCIVKLYFVLGE.

This sequence belongs to the CLASP family. In terms of assembly, interacts with CLIP-190 and microtubules. In terms of tissue distribution, expressed in testis and ovary.

It is found in the cytoplasm. It localises to the cytoskeleton. The protein resides in the nucleus. The protein localises to the microtubule organizing center. Its subcellular location is the centrosome. It is found in the spindle. It localises to the cell projection. The protein resides in the growth cone. The protein localises to the cleavage furrow. Functionally, microtubule plus-end tracking protein that promotes the stabilization of dynamic microtubules. Required for several aspects of mitotic spindle formation including the formation of the overlapping central spindle microtubules and kinetochore attachment. Required for the incorporation of tubulin subunits at the plus ends of kinetochore microtubules during poleward microtubule flux. Acts antagonistically to Klp10A and Klp67A to maintain metaphase spindle length. Also required for guidance of CNS axons downstream of Abl. May function to identify a subset of microtubules that probe the peripheral growth cone domain, where guidance signals exert their influence on cytoskeletal organization. Also required during oogenesis for the organization of the polarized microtubule network inside the 16-cell cyst that ensures oocyte differentiation. This chain is CLIP-associating protein (chb), found in Drosophila melanogaster (Fruit fly).